The primary structure comprises 198 residues: MIHSHFFAHLSRLKLINRWPLMRNVRTENVSEHSLQVAMVAHALALIKNARFAGNLNPERIALMAVYHDASEVLTGDLPTPVKYYNAQIAHEYKKIEKIAQHKLIEMLPEELRSAYAPLIDEHQHSEAETAIVKQADALCAYLKCLEELSAGNNEFLTAKARLEKTLAQRRSQEMDYFMEVFVPSFSLSLDEISQESL.

Residues 18–19 and His33 contribute to the substrate site; that span reads RW. In terms of domain architecture, HD spans 30–142; the sequence is VSEHSLQVAM…VKQADALCAY (113 aa). A divalent metal cation-binding residues include His33, His68, and Asp69. Substrate-binding positions include Asp69, 77 to 80, and Asp137; that span reads DLPT. Residue Asp137 coordinates a divalent metal cation.

This sequence belongs to the 5DNU family. In terms of assembly, homodimer. The cofactor is a divalent metal cation.

It is found in the cytoplasm. The catalysed reaction is a 2'-deoxyribonucleoside 5'-phosphate + H2O = a 2'-deoxyribonucleoside + phosphate. Its function is as follows. Catalyzes the strictly specific dephosphorylation of 2'-deoxyribonucleoside 5'-monophosphates. This Erwinia tasmaniensis (strain DSM 17950 / CFBP 7177 / CIP 109463 / NCPPB 4357 / Et1/99) protein is 5'-deoxynucleotidase ETA_12010.